The primary structure comprises 588 residues: Adenine deaminase (588 aa).

The protein belongs to the metallo-dependent hydrolases superfamily. Adenine deaminase family. In terms of assembly, homodimer. Mn(2+) serves as cofactor.

The enzyme catalyses adenine + H2O + H(+) = hypoxanthine + NH4(+). The protein is Adenine deaminase of Escherichia coli O17:K52:H18 (strain UMN026 / ExPEC).